The following is an 89-amino-acid chain: Small ribosomal subunit protein uS17 (89 aa).

The protein belongs to the universal ribosomal protein uS17 family. In terms of assembly, part of the 30S ribosomal subunit.

Functionally, one of the primary rRNA binding proteins, it binds specifically to the 5'-end of 16S ribosomal RNA. In Coxiella burnetii (strain RSA 331 / Henzerling II), this protein is Small ribosomal subunit protein uS17.